Here is a 314-residue protein sequence, read N- to C-terminus: Hydroxyacyl-coenzyme A dehydrogenase, mitochondrial (314 aa).

Residues 1–12 constitute a mitochondrion transit peptide; sequence MAFVTRQFLRSM. NAD(+)-binding positions include 34-39 and Asp57; that span reads GGGLMG. Ser73 lines the CoA pocket. Residue Lys75 is modified to N6-acetyllysine. Lys80 contributes to the CoA binding site. N6-succinyllysine is present on Lys80. N6-acetyllysine; alternate occurs at positions 81 and 87. Lys81 and Lys87 each carry N6-succinyllysine; alternate. Glu122 lines the NAD(+) pocket. Lys125 carries the post-translational modification N6-acetyllysine. NAD(+) is bound at residue Lys127. Lys127 bears the N6-(2-hydroxyisobutyryl)lysine mark. N6-acetyllysine; alternate is present on Lys136. At Lys136 the chain carries N6-succinyllysine; alternate. 2 residues coordinate NAD(+): Ser149 and Asn173. Ser149 contributes to the CoA binding site. Lys179 bears the N6-acetyllysine mark. Residues Lys185, Lys192, and Lys202 each carry the N6-acetyllysine; alternate modification. N6-succinyllysine; alternate occurs at positions 185, 192, and 202. Lys206 carries the post-translational modification N6-succinyllysine. N6-acetyllysine; alternate is present on residues Lys212 and Lys241. N6-succinyllysine; alternate is present on residues Lys212 and Lys241. Lys305 is a binding site for NAD(+). Lys312 is subject to N6-acetyllysine; alternate. Lys312 is modified (N6-succinyllysine; alternate).

Belongs to the 3-hydroxyacyl-CoA dehydrogenase family. Homodimer. Interacts with GLUD1; this interaction inhibits the activation of glutamate dehydrogenase 1 (GLUD1). Post-translationally, succinylation at Lys-81, adjacent to a coenzyme A binding site. Desuccinylated by SIRT5. Expressed in liver, kidney, brain, and pancreatic islets.

The protein localises to the mitochondrion matrix. It localises to the nucleus. Its subcellular location is the cytoplasm. The protein resides in the cytosol. The enzyme catalyses a (3S)-3-hydroxyacyl-CoA + NAD(+) = a 3-oxoacyl-CoA + NADH + H(+). The catalysed reaction is (3S)-3-hydroxybutanoyl-CoA + NAD(+) = acetoacetyl-CoA + NADH + H(+). It carries out the reaction (3S)-hydroxydecanoyl-CoA + NAD(+) = 3-oxodecanoyl-CoA + NADH + H(+). It catalyses the reaction (3S)-hydroxyhexadecanoyl-CoA + NAD(+) = 3-oxohexadecanoyl-CoA + NADH + H(+). Its pathway is lipid metabolism; fatty acid beta-oxidation. Mitochondrial fatty acid beta-oxidation enzyme that catalyzes the third step of the beta-oxidation cycle for medium and short-chain 3-hydroxy fatty acyl-CoAs (C4 to C10). Plays a role in the control of insulin secretion by inhibiting the activation of glutamate dehydrogenase 1 (GLUD1), an enzyme that has an important role in regulating amino acid-induced insulin secretion. Plays a role in the maintenance of normal spermatogenesis through the reduction of fatty acid accumulation in the testes. Its function is as follows. Inhibits cell proliferation. The polypeptide is Hydroxyacyl-coenzyme A dehydrogenase, mitochondrial (Hadh) (Mus musculus (Mouse)).